We begin with the raw amino-acid sequence, 687 residues long: Chloride channel protein ClC-Kb (687 aa).

The Cytoplasmic segment spans residues 1 to 50 (MEELVGLREGASKKPVPLQELWGPCPRIRRNIQGGLEWLKERLFRVGEDW). 2 consecutive transmembrane segments (helical) span residues 51-82 (YFLV…KWLY) and 91-111 (LRYL…SGFS). Positions 116–127 (PSSGGSGIPEVK) form an intramembrane region, helical. Residue S121 coordinates chloride. Helical transmembrane passes span 141 to 160 (IKNF…TGST) and 161 to 180 (IFLG…AAYL). An intramembrane region (helical) is located at residues 203 to 224 (AGAAVGVATVFAAPISGVLFSI). The helical transmembrane segment at 236–255 (YWRGFFAATCGAFMFHLLAV) threads the bilayer. Ca(2+)-binding residues include E259, E261, D278, and E281. 2 helical membrane passes run 282 to 310 (IFFF…LFFL) and 325 to 342 (PLYS…TYPP). An intramembrane region (helical) is located at residues 349–360 (ASRLSMSEHLET). 2 helical membrane passes run 400–420 (GTLV…TTIP) and 421–440 (IPAG…GRLF). Residue F426 coordinates chloride. The segment at residues 464-496 (GAYALAGAAAFSGAVTHTLSTALLAFEVTGQLV) is an intramembrane region (helical). The chain crosses the membrane as a helical span at residues 500-520 (PVLMAVLAANAISQSFQPSFY). Residues 521–687 (DGTIIVKKLP…STLTNPPAPK (167 aa)) are Cytoplasmic-facing. CBS domains follow at residues 551–609 (MNCA…EPAS) and 626–687 (CPTQ…PAPK).

The protein belongs to the chloride channel (TC 2.A.49) family. CLCNKB subfamily. In terms of assembly, homodimer. Interacts with BSND. N-glycosylated. In terms of tissue distribution, specifically expressed in the kidney, predominantly in the outer medulla and cortex. All nephron segments expressing BSND also express CLCNK proteins.

The protein localises to the basolateral cell membrane. The enzyme catalyses chloride(in) = chloride(out). The catalysed reaction is iodide(out) = iodide(in). It carries out the reaction nitrate(in) = nitrate(out). It catalyses the reaction bromide(in) = bromide(out). Functionally, anion-selective channel permeable to small monovalent anions with ion selectivity for chloride &gt; bromide &gt; nitrate &gt; iodide. Forms a homodimeric channel where each subunit has its own ion conduction pathway. May conduct double-barreled currents controlled by two types of gates, two fast gates that control each subunit independently and a slow common gate that opens and shuts off both subunits simultaneously. Assembles with the regulatory subunit BSND/Barttin for sorting at the basolateral plasma membrane domain and functional switch to the ion conducting state. CLCNKB:BSND channels display mostly a linear current-voltage relationship controlled by common gate. Mediates chloride conductance along nephron segments, namely the thick ascending limb of Henle's loop, convoluted tubule and the collecting duct, contributing to the maintenance of systemic acid-base and electrolyte homeostasis. Conducts chloride currents in the stria vascularis of the inner ear to establish the endocochlear potential necessary for normal hearing. The sequence is that of Chloride channel protein ClC-Kb from Mus musculus (Mouse).